The sequence spans 257 residues: Imidazole glycerol phosphate synthase subunit HisF (257 aa).

Active-site residues include Asp11 and Asp130.

This sequence belongs to the HisA/HisF family. In terms of assembly, heterodimer of HisH and HisF.

The protein resides in the cytoplasm. The catalysed reaction is 5-[(5-phospho-1-deoxy-D-ribulos-1-ylimino)methylamino]-1-(5-phospho-beta-D-ribosyl)imidazole-4-carboxamide + L-glutamine = D-erythro-1-(imidazol-4-yl)glycerol 3-phosphate + 5-amino-1-(5-phospho-beta-D-ribosyl)imidazole-4-carboxamide + L-glutamate + H(+). Its pathway is amino-acid biosynthesis; L-histidine biosynthesis; L-histidine from 5-phospho-alpha-D-ribose 1-diphosphate: step 5/9. In terms of biological role, IGPS catalyzes the conversion of PRFAR and glutamine to IGP, AICAR and glutamate. The HisF subunit catalyzes the cyclization activity that produces IGP and AICAR from PRFAR using the ammonia provided by the HisH subunit. This is Imidazole glycerol phosphate synthase subunit HisF from Pseudoalteromonas translucida (strain TAC 125).